We begin with the raw amino-acid sequence, 125 residues long: Small ribosomal subunit protein uS13 (125 aa).

The tract at residues R92–K125 is disordered.

The protein belongs to the universal ribosomal protein uS13 family. Part of the 30S ribosomal subunit. Forms a loose heterodimer with protein S19. Forms two bridges to the 50S subunit in the 70S ribosome.

In terms of biological role, located at the top of the head of the 30S subunit, it contacts several helices of the 16S rRNA. In the 70S ribosome it contacts the 23S rRNA (bridge B1a) and protein L5 of the 50S subunit (bridge B1b), connecting the 2 subunits; these bridges are implicated in subunit movement. Contacts the tRNAs in the A and P-sites. The polypeptide is Small ribosomal subunit protein uS13 (Akkermansia muciniphila (strain ATCC BAA-835 / DSM 22959 / JCM 33894 / BCRC 81048 / CCUG 64013 / CIP 107961 / Muc)).